A 63-amino-acid chain; its full sequence is MNFAKILSFVFALVLALSMTSAAPEPRWKIFKKIEKMGRNIRDGIVKAGPAIEVLGSAKAIGK.

The first 22 residues, 1-22, serve as a signal peptide directing secretion; that stretch reads MNFAKILSFVFALVLALSMTSA. The propeptide at 23-26 is removed by a dipeptidylpeptidase; sequence APEP. Lys47 is modified (5-hydroxylysine; partial). Isoleucine amide is present on Ile61.

It belongs to the cecropin family. Post-translationally, lepidopteran-B differs from lepidopteran-A by its hydroxylated residue. In terms of tissue distribution, highest expression in fat body and hemocytes. Is also expressed in Malpighian tubules and to a much lesser extent in midgut. Not present in silk gland.

It localises to the secreted. In terms of biological role, cecropins have lytic and antibacterial activity against several Gram-positive and Gram-negative bacteria. This is Cecropin-B (CECB1) from Bombyx mori (Silk moth).